We begin with the raw amino-acid sequence, 191 residues long: Large ribosomal subunit protein uL29m (191 aa).

It belongs to the universal ribosomal protein uL29 family. Component of the mitochondrial large ribosomal subunit. Mature mitochondrial ribosomes consist of a small (37S) and a large (54S) subunit. The 37S subunit contains at least 33 different proteins and 1 molecule of RNA (15S). The 54S subunit contains at least 45 different proteins and 1 molecule of RNA (21S).

It is found in the mitochondrion. The protein is Large ribosomal subunit protein uL29m (MRPL4) of Sclerotinia sclerotiorum (strain ATCC 18683 / 1980 / Ss-1) (White mold).